A 340-amino-acid chain; its full sequence is Protein RecA (340 aa).

65-72 (GPESGGKT) is an ATP binding site.

Belongs to the RecA family.

The protein resides in the cytoplasm. Functionally, can catalyze the hydrolysis of ATP in the presence of single-stranded DNA, the ATP-dependent uptake of single-stranded DNA by duplex DNA, and the ATP-dependent hybridization of homologous single-stranded DNAs. It interacts with LexA causing its activation and leading to its autocatalytic cleavage. The polypeptide is Protein RecA (Thermus aquaticus).